Here is a 224-residue protein sequence, read N- to C-terminus: Urease accessory protein UreF 2 (224 aa).

Belongs to the UreF family. UreD, UreF and UreG form a complex that acts as a GTP-hydrolysis-dependent molecular chaperone, activating the urease apoprotein by helping to assemble the nickel containing metallocenter of UreC. The UreE protein probably delivers the nickel.

It localises to the cytoplasm. Functionally, required for maturation of urease via the functional incorporation of the urease nickel metallocenter. The polypeptide is Urease accessory protein UreF 2 (Pseudomonas syringae pv. tomato (strain ATCC BAA-871 / DC3000)).